Reading from the N-terminus, the 532-residue chain is MKWSEMASVNATQQHLNFSSSWEEDSSDNSFDEWTHKSVPLRSPCRTPRIQRHRNRSITVSPSVPTSPIPYAAWKKLRLCDSPSTPKSLLSKSTMPCSSSKTCRSQRFLRLSTAFERVPSVNINPFTPDTVRRNSEHYKRKSQRSDDDEDYGPRSKEIQNSSEDESFFLPSKRPAVSARMLSRYESEFLELACIGVGEFGSVYRCVKRLDGCMYAIKRSRRPIAGSANEQLALKEVYAHAVLGHHPHVVRYYSAWAEDDHMIIQNEYCDGGSLHDAITEKREQGEFFSVPELRDLLLQVSMGLKYIHNSGLVHLDIKPSNIFICRRSTLSAGGEGDSEEEDESHSSGVVYKIGDLGHVTSISSPQVEEGDSRFLAYEVLREDYTHLPKADIFALGLTVLLAAGASPLPQNGDDWHRLRQGELPNLPHELPALFKDLLKSLLDPDPTARPSATALCRHDVLCKERAGKLATQLRKELNVEKFRTAMLERELKEARLAATSPQQSCQPGSLPKAKRKLVGRNVARSVSFGFPGY.

Residues 123-166 form a disordered region; sequence INPFTPDTVRRNSEHYKRKSQRSDDDEDYGPRSKEIQNSSEDES. One can recognise a Protein kinase domain in the interval 188 to 465; that stretch reads FLELACIGVG…RHDVLCKERA (278 aa). ATP-binding positions include 194-202 and K217; that span reads IGVGEFGSV. Residue D315 is the Proton acceptor of the active site. Mg(2+) is bound by residues N320 and D354. Positions 469–495 form a coiled coil; that stretch reads ATQLRKELNVEKFRTAMLERELKEARL.

Belongs to the protein kinase superfamily. Ser/Thr protein kinase family. WEE1 subfamily.

Its subcellular location is the nucleus. The catalysed reaction is L-tyrosyl-[protein] + ATP = O-phospho-L-tyrosyl-[protein] + ADP + H(+). Its function is as follows. Oocyte-specific protein tyrosine kinase that phosphorylates and inhibits cdk1 and acts as a key regulator of meiosis. Required to maintain meiotic arrest in oocytes by phosphorylating cdk1 at 'Tyr-15', leading to inhibit cdk1 activity and prevent meiotic reentry. This chain is Wee1-like protein kinase 2 (wee2), found in Danio rerio (Zebrafish).